The primary structure comprises 482 residues: tRNA sulfurtransferase (482 aa).

In terms of domain architecture, THUMP spans 61-165 (LAIRDALTRI…DDRLLLIKGR (105 aa)). ATP is bound by residues 183-184 (LI), lysine 265, glycine 287, and glutamine 296. Cysteine 344 and cysteine 456 are joined by a disulfide. The Rhodanese domain occupies 404 to 482 (FGPNDVILDI…GFENVKVYRP (79 aa)). Cysteine 456 functions as the Cysteine persulfide intermediate in the catalytic mechanism.

This sequence belongs to the ThiI family.

The protein resides in the cytoplasm. The enzyme catalyses [ThiI sulfur-carrier protein]-S-sulfanyl-L-cysteine + a uridine in tRNA + 2 reduced [2Fe-2S]-[ferredoxin] + ATP + H(+) = [ThiI sulfur-carrier protein]-L-cysteine + a 4-thiouridine in tRNA + 2 oxidized [2Fe-2S]-[ferredoxin] + AMP + diphosphate. The catalysed reaction is [ThiS sulfur-carrier protein]-C-terminal Gly-Gly-AMP + S-sulfanyl-L-cysteinyl-[cysteine desulfurase] + AH2 = [ThiS sulfur-carrier protein]-C-terminal-Gly-aminoethanethioate + L-cysteinyl-[cysteine desulfurase] + A + AMP + 2 H(+). It participates in cofactor biosynthesis; thiamine diphosphate biosynthesis. Catalyzes the ATP-dependent transfer of a sulfur to tRNA to produce 4-thiouridine in position 8 of tRNAs, which functions as a near-UV photosensor. Also catalyzes the transfer of sulfur to the sulfur carrier protein ThiS, forming ThiS-thiocarboxylate. This is a step in the synthesis of thiazole, in the thiamine biosynthesis pathway. The sulfur is donated as persulfide by IscS. The sequence is that of tRNA sulfurtransferase from Salmonella enteritidis PT4 (strain P125109).